The primary structure comprises 194 residues: Thymidine kinase (194 aa).

Residues 15 to 22 and 89 to 92 each bind ATP; these read GPMFSGKS and DEAH. The Proton acceptor role is filled by Glu-90. Zn(2+) contacts are provided by Cys-146, Cys-149, Cys-178, and Cys-181.

Belongs to the thymidine kinase family. As to quaternary structure, homotetramer.

The protein resides in the cytoplasm. The enzyme catalyses thymidine + ATP = dTMP + ADP + H(+). This chain is Thymidine kinase, found in Metamycoplasma arthritidis (strain 158L3-1) (Mycoplasma arthritidis).